A 487-amino-acid polypeptide reads, in one-letter code: Cytochrome P450 monooxygenase pyvB (487 aa).

A helical membrane pass occupies residues 17–37 (PAYSSVVIGALVVCLVCLVWP). Heme is bound at residue cysteine 426.

Belongs to the cytochrome P450 family. The cofactor is heme.

The protein resides in the membrane. It participates in secondary metabolite biosynthesis. Its function is as follows. Cytochrome P450 monooxygenase; part of the gene cluster that mediates the biosynthesis of pyranoviolin A, a pyranonigrin analog with a C-3 methoxy group. Initially, the PKS portion of pyvA synthesizes C-10 carbon chain from 5 molecules of malonyl-CoA, which is then condensed with the thiolation (T) domain-bound glycine activated by the adenylation (A) domain. The subsequent chain release by Dieckmann condensation (DKC) could be catalyzed by the TE domain present at the C-terminus of pyvA and/or the alpha/beta hydrolase pyvD, installing the tetramic acid moiety. The FAD-dependent monooxygenase pyvC next epoxidizes one of the olefins of the polyketide part, and the epoxide ring-opening induces the dihydro-gamma-pyrone ring formation. The cytochrome P450 monooxygeanse pyvB would be responsible for the 2 consecutive reactions, in which the dihydro-gamma-pyrone is oxidized to gamma-pyrone and C-7 is hydroxylated to yield pyranonigrin F. Finally, the O-methyltransferase pyvH methylates the C-3 hydroxy group to complete the biosynthesis. The polypeptide is Cytochrome P450 monooxygenase pyvB (Aspergillus violaceofuscus (strain CBS 115571)).